The sequence spans 451 residues: MEDHKISMEKIVSLCKRRGFVFQSSEIYGGQNGAWDYGPLGIELKNNVSRAWWKEMTQLHDNIVGLDAAILMHPRTWEASGHVENFTDPLVDCKKCKSRFRADHLPPENLEKRVCPDCGGELTDTRKFNLMFKTHIGPTDDNSSVIYLRPETAQGIYVNYKNIIQSNRMKIPFGIAQIGKAFRNEIVTKNFIFRTCEFEQMEMQFFVKPGTDDEWFDYWKKQRWAFYEKYGVRTNKLQWHQHGKDELAHYAKDAYDIEYEFPMGFKELEGVHNRTNYDLTRHTEYSGKDMQYIDQDNGNEKYIPYIIETSAGLTRNVLMFICDAYDEEKVADKGNDDDWRTVLRFHPNIAPITVAVLPLMKKDGLAELAEEIRNELKEEFKTDYDQSGAIGKRYRRQDEVGTPFCVTVDYDSKEDNTVTLRFRDSMEQVRIPRTELISRIKTEIKNYKRAH.

Substrate is bound by residues arginine 101 and glutamate 151. ATP contacts are provided by residues 183–185 (RNE), 193–198 (FRTCEF), 267–268 (EL), and 312–315 (GLTR). A substrate-binding site is contributed by 198–202 (FEQME). A substrate-binding site is contributed by 308–312 (ETSAG).

Belongs to the class-II aminoacyl-tRNA synthetase family. In terms of assembly, homodimer.

Its subcellular location is the cytoplasm. The catalysed reaction is tRNA(Gly) + glycine + ATP = glycyl-tRNA(Gly) + AMP + diphosphate. Functionally, catalyzes the attachment of glycine to tRNA(Gly). This Treponema denticola (strain ATCC 35405 / DSM 14222 / CIP 103919 / JCM 8153 / KCTC 15104) protein is Glycine--tRNA ligase.